The chain runs to 596 residues: Elongation factor 4 (596 aa).

A tr-type G domain is found at 2–184; that stretch reads KHIRNFSIIA…VIVDQIPPPE (183 aa). GTP-binding positions include 14-19 and 131-134; these read DHGKST and NKID.

Belongs to the TRAFAC class translation factor GTPase superfamily. Classic translation factor GTPase family. LepA subfamily.

Its subcellular location is the cell inner membrane. The enzyme catalyses GTP + H2O = GDP + phosphate + H(+). Functionally, required for accurate and efficient protein synthesis under certain stress conditions. May act as a fidelity factor of the translation reaction, by catalyzing a one-codon backward translocation of tRNAs on improperly translocated ribosomes. Back-translocation proceeds from a post-translocation (POST) complex to a pre-translocation (PRE) complex, thus giving elongation factor G a second chance to translocate the tRNAs correctly. Binds to ribosomes in a GTP-dependent manner. In Shewanella sp. (strain ANA-3), this protein is Elongation factor 4.